A 309-amino-acid polypeptide reads, in one-letter code: Homoserine O-succinyltransferase (309 aa).

The Acyl-thioester intermediate role is filled by C142. The substrate site is built by K163 and S192. H235 acts as the Proton acceptor in catalysis. Residue E237 is part of the active site. R249 is a binding site for substrate.

It belongs to the MetA family. As to quaternary structure, homodimer.

Its subcellular location is the cytoplasm. It catalyses the reaction L-homoserine + succinyl-CoA = O-succinyl-L-homoserine + CoA. The protein operates within amino-acid biosynthesis; L-methionine biosynthesis via de novo pathway; O-succinyl-L-homoserine from L-homoserine: step 1/1. Functionally, transfers a succinyl group from succinyl-CoA to L-homoserine, forming succinyl-L-homoserine. This is Homoserine O-succinyltransferase from Escherichia coli O157:H7.